We begin with the raw amino-acid sequence, 321 residues long: tRNA-dihydrouridine synthase B (321 aa).

Residues 16–18 (PMA) and glutamine 70 contribute to the FMN site. Cysteine 100 acts as the Proton donor in catalysis. FMN-binding positions include lysine 139, 200-202 (NGD), and 224-225 (GR).

It belongs to the Dus family. DusB subfamily. FMN serves as cofactor.

The enzyme catalyses a 5,6-dihydrouridine in tRNA + NAD(+) = a uridine in tRNA + NADH + H(+). It carries out the reaction a 5,6-dihydrouridine in tRNA + NADP(+) = a uridine in tRNA + NADPH + H(+). Catalyzes the synthesis of 5,6-dihydrouridine (D), a modified base found in the D-loop of most tRNAs, via the reduction of the C5-C6 double bond in target uridines. The protein is tRNA-dihydrouridine synthase B of Yersinia pestis.